Here is a 743-residue protein sequence, read N- to C-terminus: Putative pentatricopeptide repeat-containing protein At1g68930 (743 aa).

15 PPR repeats span residues glutamate 40 to proline 70, asparagine 71 to arginine 101, aspartate 102 to aspartate 132, threonine 138 to serine 172, tyrosine 173 to arginine 203, asparagine 204 to lysine 233, aspartate 234 to methionine 268, aspartate 269 to aspartate 303, histidine 304 to lysine 334, asparagine 335 to proline 369, aspartate 370 to histidine 404, tyrosine 405 to arginine 435, aspartate 436 to proline 470, aspartate 471 to proline 506, and serine 507 to proline 537. The tract at residues glycine 542–lysine 617 is type E motif. The type E(+) motif stretch occupies residues glycine 618–isoleucine 648. Residues aspartate 649 to tryptophan 743 are type DYW motif.

The protein belongs to the PPR family. PCMP-H subfamily.

The polypeptide is Putative pentatricopeptide repeat-containing protein At1g68930 (PCMP-H22) (Arabidopsis thaliana (Mouse-ear cress)).